The chain runs to 152 residues: Xanthine-guanine phosphoribosyltransferase (152 aa).

Residues 37-38 (RG), Arg69, and 88-96 (DDLVDTGVT) contribute to the 5-phospho-alpha-D-ribose 1-diphosphate site. Arg69 serves as a coordination point for GMP. Asp89 provides a ligand contact to Mg(2+). Guanine is bound by residues Asp92 and Ile135. Residues Asp92 and Ile135 each coordinate xanthine. GMP is bound by residues 92–96 (DTGVT) and 134–135 (WI).

The protein belongs to the purine/pyrimidine phosphoribosyltransferase family. XGPT subfamily. In terms of assembly, homotetramer. Mg(2+) is required as a cofactor.

The protein resides in the cell inner membrane. It carries out the reaction GMP + diphosphate = guanine + 5-phospho-alpha-D-ribose 1-diphosphate. It catalyses the reaction XMP + diphosphate = xanthine + 5-phospho-alpha-D-ribose 1-diphosphate. The enzyme catalyses IMP + diphosphate = hypoxanthine + 5-phospho-alpha-D-ribose 1-diphosphate. It functions in the pathway purine metabolism; GMP biosynthesis via salvage pathway; GMP from guanine: step 1/1. Its pathway is purine metabolism; XMP biosynthesis via salvage pathway; XMP from xanthine: step 1/1. Purine salvage pathway enzyme that catalyzes the transfer of the ribosyl-5-phosphate group from 5-phospho-alpha-D-ribose 1-diphosphate (PRPP) to the N9 position of the 6-oxopurines guanine and xanthine to form the corresponding ribonucleotides GMP (guanosine 5'-monophosphate) and XMP (xanthosine 5'-monophosphate), with the release of PPi. To a lesser extent, also acts on hypoxanthine. This is Xanthine-guanine phosphoribosyltransferase from Sodalis glossinidius (strain morsitans).